The sequence spans 283 residues: Protein-L-isoaspartate O-methyltransferase (283 aa).

Ser122 is a catalytic residue.

It belongs to the methyltransferase superfamily. L-isoaspartyl/D-aspartyl protein methyltransferase family.

Its subcellular location is the cytoplasm. The catalysed reaction is [protein]-L-isoaspartate + S-adenosyl-L-methionine = [protein]-L-isoaspartate alpha-methyl ester + S-adenosyl-L-homocysteine. Its function is as follows. Catalyzes the methyl esterification of L-isoaspartyl residues in peptides and proteins that result from spontaneous decomposition of normal L-aspartyl and L-asparaginyl residues. It plays a role in the repair and/or degradation of damaged proteins. This is Protein-L-isoaspartate O-methyltransferase from Leptothrix cholodnii (strain ATCC 51168 / LMG 8142 / SP-6) (Leptothrix discophora (strain SP-6)).